The primary structure comprises 313 residues: Ribosomal protein L11 methyltransferase (313 aa).

S-adenosyl-L-methionine contacts are provided by T164, G185, D207, and N249.

The protein belongs to the methyltransferase superfamily. PrmA family.

Its subcellular location is the cytoplasm. The enzyme catalyses L-lysyl-[protein] + 3 S-adenosyl-L-methionine = N(6),N(6),N(6)-trimethyl-L-lysyl-[protein] + 3 S-adenosyl-L-homocysteine + 3 H(+). In terms of biological role, methylates ribosomal protein L11. This chain is Ribosomal protein L11 methyltransferase, found in Clostridium perfringens (strain ATCC 13124 / DSM 756 / JCM 1290 / NCIMB 6125 / NCTC 8237 / Type A).